Here is a 212-residue protein sequence, read N- to C-terminus: Large ribosomal subunit protein uL3 (212 aa).

The disordered stretch occupies residues 130 to 155 (KRGNMTHGSKNHRLPGSTGAGTTPGR).

This sequence belongs to the universal ribosomal protein uL3 family. Part of the 50S ribosomal subunit. Forms a cluster with proteins L14 and L19.

Its function is as follows. One of the primary rRNA binding proteins, it binds directly near the 3'-end of the 23S rRNA, where it nucleates assembly of the 50S subunit. This is Large ribosomal subunit protein uL3 from Rippkaea orientalis (strain PCC 8801 / RF-1) (Cyanothece sp. (strain PCC 8801)).